The following is a 312-amino-acid chain: Ribonuclease HIII (312 aa).

An RNase H type-2 domain is found at 95 to 311 (FNCIGSDEAG…REKAQKILKP (217 aa)). Residues Asp101, Glu102, and Asp206 each coordinate a divalent metal cation.

The protein belongs to the RNase HII family. RnhC subfamily. Mn(2+) serves as cofactor. The cofactor is Mg(2+).

Its subcellular location is the cytoplasm. It carries out the reaction Endonucleolytic cleavage to 5'-phosphomonoester.. In terms of biological role, endonuclease that specifically degrades the RNA of RNA-DNA hybrids. The sequence is that of Ribonuclease HIII from Staphylococcus aureus (strain Mu3 / ATCC 700698).